A 1883-amino-acid polypeptide reads, in one-letter code: Transmembrane protein 131 (1883 aa).

An N-terminal signal peptide occupies residues 1–22 (MGKRAGGGATGATTAAVSTSAG). The Lumenal segment spans residues 23-1117 (AGLEPAAARS…AEALPRPNWE (1095 aa)). The tract at residues 109–283 (RFEPPMLDFH…ETKGVMRASF (175 aa)) is papD-L domain. Asn-300 is a glycosylation site (N-linked (GlcNAc...) asparagine). Ser-803 bears the Phosphoserine mark. The helical transmembrane segment at 1118–1138 (LALYIIISGIMSALFLLVIGT) threads the bilayer. Residues 1139 to 1883 (AYLEAQGIWE…WSNSHFPHEN (745 aa)) lie on the Cytoplasmic side of the membrane. 5 disordered regions span residues 1198 to 1580 (GAGG…DSLY), 1593 to 1656 (LKQR…KNGN), 1670 to 1712 (PGGN…PVSN), 1766 to 1789 (WESP…HTAT), and 1832 to 1858 (MGTE…TYNP). Over residues 1237–1261 (AKNSSSTSSRTSAQAASSQSANKTS) the composition is skewed to low complexity. The segment covering 1302 to 1316 (PQPPLPPPVPQPQEP) has biased composition (pro residues). A phosphoserine mark is found at Ser-1322 and Ser-1342. 2 stretches are compositionally biased toward basic and acidic residues: residues 1330–1343 (SHPE…HSSE) and 1353–1364 (AMDKDFDHHDSP). Residue Ser-1375 is modified to Phosphoserine. Residues 1380–1394 (SKGKGKPLQRKVKPP) are compositionally biased toward basic residues. Residues 1395 to 1417 (KKQEEKEKKGKGKPQEDELKDSL) show a composition bias toward basic and acidic residues. Residues 1423 to 1434 (SSTTTETSNPDT) show a composition bias toward low complexity. Residues 1436–1458 (PLLKEDTEKQKGKQAMPEKHESE) are compositionally biased toward basic and acidic residues. 2 stretches are compositionally biased toward polar residues: residues 1510 to 1526 (AMTS…TKGT) and 1542 to 1553 (PNSQELGNTSSS). Positions 1602 to 1611 (PASPSPPAAP) are enriched in pro residues. Residues 1619 to 1630 (SYSSIVNSSSSS) are compositionally biased toward low complexity. A compositionally biased stretch (polar residues) spans 1678–1690 (VSSNKTGFSSSLG). Composition is skewed to low complexity over residues 1773-1784 (PSPSWPASSGSP) and 1837-1849 (SPAP…SSPA). Phosphoserine is present on residues Ser-1863 and Ser-1871.

Belongs to the TMEM131 family. Interacts (via PapD-L domain) with COL1A2 (via C-terminus); the interaction is direct, may occur with other collagen proteins, and is involved in assembly and TRAPPIII ER-to-Golgi transport complex-dependent secretion of collagen. Interacts (via C-terminus) with TRAPPC8 (via C-terminus); the interaction is direct.

The protein resides in the membrane. Its function is as follows. Collagen binding transmembrane protein involved in collagen secretion by recruiting the ER-to-Golgi transport complex TRAPPIII. May play a role in the immune response to viral infection. The sequence is that of Transmembrane protein 131 from Homo sapiens (Human).